Here is a 513-residue protein sequence, read N- to C-terminus: Protein CYCLOPS (513 aa).

2 disordered regions span residues 329-380 (QGRT…STQN) and 395-435 (DDRK…AEAK). Positions 333-347 (ASGEPSQSESSAAAP) are enriched in low complexity. A compositionally biased stretch (polar residues) spans 359–380 (PSNSNQTLGDSSWKQVGESTQN). 2 consecutive short sequence motifs (nuclear localization signal) follow at residues 397–400 (RKRK) and 421–424 (KKRR). Residues 447 to 513 (MQAILKRCEN…ERILSETGKI (67 aa)) adopt a coiled-coil conformation.

This sequence belongs to the CYCLOPS family. As to quaternary structure, forms homodimers. Interacts with CCAMK. In terms of tissue distribution, highly expressed in roots. Expressed in root hairs and nodules. Not detected in leaves or flowers.

It localises to the nucleus. In terms of biological role, involved symbiotic signaling. Required for root infection by symbiotic rhizobia, infection thread (IT) formation, and nodule development. Required for proper induction of early nodulin gene expression. Probably not involved in nodule organogenesis. Involved in arbuscular mycorrhizal (AM) symbiosis. Required for fungal infection of the outer cortical cell layers, and for arbuscule development during the AM symbiosis. Acts downstream of CCAMK. Required for symbiosome formation (i.e. the release of the bacteria from the ITs) and subsequent symbiosome development. Required for the expression of the nodule-specific RPG gene, which controls proper IT growth and is essential for symbiosome formation. Acts upstream of ERN1, a transcriptional regulator required for nodulation. This is Protein CYCLOPS from Medicago truncatula (Barrel medic).